The following is a 446-amino-acid chain: MQESQETHISNHLDEIVAAVSITPRKKLLNQLLQRALFQPPREKLRLSEEKAKSYASSHEYKKALHELVHCMALTRICYGDSHWKLAEAHVNLAKGYLQLKGMSLRAKQHAEKAKEILTSSVAPPYSDNTDVFKCSVELFHTLGQALLSLQKFKEASKNLTKAEILSKEMLQCGKIIKEEWMEIQARIKLSFAQVYQGQKKSKEALPHYQEALEYTEISRGEKSLECVPILRELAAAEQALGFHDASINNLIQAHLIVLRGSPSREEAATSAHSVACAAIASGRPEHHDVAEQYFQDSMANLKDAEGKETAKFLSIQDDYCHFLQVTGQDEKATSIFRESLEAKVAVFGDFSPEVAETYRLLGVADLAQGNQTGAHKKLKKCLQIQTLLYGPQDKRTLATQQTMDILSKAPEVPARPRPSPGAKAAFCAGGRPYSVPGRTRPSAAD.

5 TPR repeats span residues 45–78 (LRLSEEKAKSYASSHEYKKALHELVHCMALTRIC), 137–170 (VELFHTLGQALLSLQKFKEASKNLTKAEILSKEM), 186–219 (ARIKLSFAQVYQGQKKSKEALPHYQEALEYTEIS), 310–347 (TAKFLSIQDDYCHFLQVTGQDEKATSIFRESLEAKVAV), and 356–389 (AETYRLLGVADLAQGNQTGAHKKLKKCLQIQTLL). A disordered region spans residues 410–446 (APEVPARPRPSPGAKAAFCAGGRPYSVPGRTRPSAAD).

Associated with the EvC complex composed of EFCAB7, IQCE, EVC2 and EVC.

The protein localises to the cell projection. It is found in the cilium. Its function is as follows. Participates positively in the ciliary Hedgehog (Hh) signaling. This Bos taurus (Bovine) protein is Tetratricopeptide repeat protein 23 (TTC23).